A 427-amino-acid polypeptide reads, in one-letter code: Histidine--tRNA ligase (427 aa).

The protein belongs to the class-II aminoacyl-tRNA synthetase family. As to quaternary structure, homodimer.

It localises to the cytoplasm. The enzyme catalyses tRNA(His) + L-histidine + ATP = L-histidyl-tRNA(His) + AMP + diphosphate + H(+). The sequence is that of Histidine--tRNA ligase from Lacticaseibacillus casei (strain BL23) (Lactobacillus casei).